Here is a 563-residue protein sequence, read N- to C-terminus: RUN and FYVE domain-containing protein 4 (563 aa).

The 134-residue stretch at 33-166 (TETSAELHRL…VAFNLDLQRP (134 aa)) folds into the RUN domain. 2 disordered regions span residues 176 to 327 (SESR…TTEG) and 375 to 397 (KKSSPTEKPQEWTGVTSGTMQED). Composition is skewed to basic and acidic residues over residues 196 to 205 (GFPEEVRCSR) and 263 to 284 (ETEREGFQLDQKDGGPKPRKFL). The segment covering 285 to 295 (ENSTASIQQQR) has biased composition (polar residues). The span at 297 to 312 (RAKDVKMQLTGRKVEG) shows a compositional bias: basic and acidic residues. Polar residues predominate over residues 385–396 (EWTGVTSGTMQE). Positions 421 to 462 (QAQCQEQLRAQEAELQALQEQLSRCQKERALLQVKLEQKQQE) form a coiled coil. An FYVE-type zinc finger spans residues 428–558 (LRAQEAELQA…RCCPTCAQQE (131 aa)). Residues Cys513, Cys516, Cys529, Cys532, Cys537, Cys540, Cys551, and Cys554 each coordinate Zn(2+).

As to quaternary structure, forms homodimers (via coiled coil domain). Forms a ternary complex with RAB7A and LAMP2; the interaction with RAB7A is mediated by RUFY4 (via RUN and coiled coil domains). Interacts with GTP-, but not GDP-bound ARL8A and ARL8B. Interacts with dynactin/DCTN1 and the dynein intermediate chain DYNC1I1/2. As to expression, expressed in dendritic cells.

The protein localises to the cytoplasmic vesicle. The protein resides in the autophagosome. Its subcellular location is the lysosome. Functionally, ARL8 effector that promotes the coupling of endolysosomes to dynein-dynactin for retrograde transport along microtubules. Acts by binding both GTP-bound ARL8 and dynein-dynactin. In nonneuronal cells, promotes concentration of endolysosomes in the juxtanuclear area. In hippocampal neurons, drives retrograde transport of endolysosomes from the axon to the soma. Positive regulator of macroautophagy in dendritic cells. Increases autophagic flux, probably by stimulating both autophagosome formation and facilitating tethering with lysosomes. Binds to phosphatidylinositol 3-phosphate (PtdIns3P) through its FYVE-type zinc finger. Positive regulator of osteosclast bone-resorbing activity, possibly by promoting late endosome-lysosome fusion by acting as an adapter protein between RAB7A on late endosomes and LAMP2 on primary lysosomes. This chain is RUN and FYVE domain-containing protein 4 (Rufy4), found in Mus musculus (Mouse).